We begin with the raw amino-acid sequence, 523 residues long: UDP-glucuronosyltransferase 3A2 (523 aa).

The first 22 residues, 1 to 22 (MAAHRRWLLMSFLFLEVILLEA), serve as a signal peptide directing secretion. Residues 23–487 (AKILTISTLS…QPWHEQYMLD (465 aa)) lie on the Extracellular side of the membrane. Asn52 is a glycosylation site (N-linked (GlcNAc...) asparagine). Residues 488 to 508 (VFLFLLGLMLGTLWLSVKVLV) form a helical membrane-spanning segment. The Cytoplasmic segment spans residues 509–523 (AVTRYLSIATKVKEA).

This sequence belongs to the UDP-glycosyltransferase family. In terms of tissue distribution, highly expressed in kidney, while it is expressed at low levels in liver. Not detected in other tissues examined.

The protein resides in the membrane. The enzyme catalyses glucuronate acceptor + UDP-alpha-D-glucuronate = acceptor beta-D-glucuronoside + UDP + H(+). UDP-glucuronosyltransferases catalyze phase II biotransformation reactions in which lipophilic substrates are conjugated with glucuronic acid to increase water solubility and enhance excretion. They are of major importance in the conjugation and subsequent elimination of potentially toxic xenobiotics and endogenous compounds. The protein is UDP-glucuronosyltransferase 3A2 (Ugt3a2) of Mus musculus (Mouse).